Consider the following 204-residue polypeptide: NADH-ubiquinone oxidoreductase chain 6 (204 aa).

5 helical membrane passes run 5–25 (IFLF…VIGL), 29–49 (VHSV…LLLL), 56–76 (FMLI…VVMM), 91–111 (LWPI…SSFY), and 151–171 (LLFL…IVLT).

The protein belongs to the complex I subunit 6 family.

The protein localises to the mitochondrion membrane. It catalyses the reaction a ubiquinone + NADH + 5 H(+)(in) = a ubiquinol + NAD(+) + 4 H(+)(out). In terms of biological role, core subunit of the mitochondrial membrane respiratory chain NADH dehydrogenase (Complex I) that is believed to belong to the minimal assembly required for catalysis. Complex I functions in the transfer of electrons from NADH to the respiratory chain. The immediate electron acceptor for the enzyme is believed to be ubiquinone. This is NADH-ubiquinone oxidoreductase chain 6 (ND6) from Chondrus crispus (Carrageen Irish moss).